The following is a 378-amino-acid chain: Putative F-box protein At5g51000 (378 aa).

The F-box domain occupies 1 to 47 (MSTMSDLFPDLVEEILSRVPITSLKAVKLTCKQWNDLSKDSSFTKNH).

The chain is Putative F-box protein At5g51000 from Arabidopsis thaliana (Mouse-ear cress).